We begin with the raw amino-acid sequence, 114 residues long: uncharacterized protein (114 aa).

It to M.jannaschii MJ0310 and MJ0714.

This is an uncharacterized protein from Methanocaldococcus jannaschii (strain ATCC 43067 / DSM 2661 / JAL-1 / JCM 10045 / NBRC 100440) (Methanococcus jannaschii).